The primary structure comprises 20 residues: IVGGTEVTPGEIPYQLSFQD.

One can recognise a Peptidase S1 domain in the interval 1 to 20 (IVGGTEVTPGEIPYQLSFQD). The interval 1–20 (IVGGTEVTPGEIPYQLSFQD) is disordered.

It belongs to the peptidase S1 family.

It catalyses the reaction Hydrolysis of proteins, with broad specificity for peptide bonds. Native collagen is cleaved about 75% of the length of the molecule from the N-terminus. Low activity on small molecule substrates of both trypsin and chymotrypsin.. In terms of biological role, this enzyme is a serine protease capable of degrading the native triple helix of collagen. The chain is Collagenolytic protease 35 kDa 2 from Chionoecetes opilio (Atlantic snow crab).